A 501-amino-acid polypeptide reads, in one-letter code: Phase 2 flagellin (501 aa).

It belongs to the bacterial flagellin family.

The protein localises to the secreted. Its subcellular location is the bacterial flagellum. Flagellin is the subunit protein which polymerizes to form the filaments of bacterial flagella. The chain is Phase 2 flagellin (fljB) from Salmonella abortus-equi.